Here is a 20-residue protein sequence, read N- to C-terminus: Hemocyanin subunit II (20 aa).

The segment at 1 to 20 is disordered; sequence DVVASSTAHKQQDINHLLDK. Over residues 10–20 the composition is skewed to basic and acidic residues; it reads KQQDINHLLDK.

Belongs to the tyrosinase family. Hemocyanin subfamily. In terms of assembly, composed of 3 major subunits (IB, II and III) and 1 minor subunit (IA) which form homohexamers and heterohexamers. May also form larger structures. Hemolymph.

It localises to the secreted. It is found in the extracellular space. In terms of biological role, hemocyanins are copper-containing oxygen carriers occurring freely dissolved in the hemolymph of many mollusks and arthropods. This chain is Hemocyanin subunit II, found in Panulirus japonicus (Japanese spiny lobster).